The chain runs to 420 residues: 4-hydroxy-3-methylbut-2-en-1-yl diphosphate synthase (flavodoxin) (420 aa).

[4Fe-4S] cluster is bound by residues C307, C310, C353, and E360.

Belongs to the IspG family. [4Fe-4S] cluster is required as a cofactor.

It catalyses the reaction (2E)-4-hydroxy-3-methylbut-2-enyl diphosphate + oxidized [flavodoxin] + H2O + 2 H(+) = 2-C-methyl-D-erythritol 2,4-cyclic diphosphate + reduced [flavodoxin]. It functions in the pathway isoprenoid biosynthesis; isopentenyl diphosphate biosynthesis via DXP pathway; isopentenyl diphosphate from 1-deoxy-D-xylulose 5-phosphate: step 5/6. In terms of biological role, converts 2C-methyl-D-erythritol 2,4-cyclodiphosphate (ME-2,4cPP) into 1-hydroxy-2-methyl-2-(E)-butenyl 4-diphosphate. The polypeptide is 4-hydroxy-3-methylbut-2-en-1-yl diphosphate synthase (flavodoxin) (Brucella melitensis biotype 2 (strain ATCC 23457)).